We begin with the raw amino-acid sequence, 345 residues long: Phosphoribosylformylglycinamidine cyclo-ligase (345 aa).

Belongs to the AIR synthase family.

Its subcellular location is the cytoplasm. It catalyses the reaction 2-formamido-N(1)-(5-O-phospho-beta-D-ribosyl)acetamidine + ATP = 5-amino-1-(5-phospho-beta-D-ribosyl)imidazole + ADP + phosphate + H(+). It functions in the pathway purine metabolism; IMP biosynthesis via de novo pathway; 5-amino-1-(5-phospho-D-ribosyl)imidazole from N(2)-formyl-N(1)-(5-phospho-D-ribosyl)glycinamide: step 2/2. The protein is Phosphoribosylformylglycinamidine cyclo-ligase of Shewanella baltica (strain OS185).